Here is a 551-residue protein sequence, read N- to C-terminus: Cilia- and flagella-associated protein 45 (551 aa).

Disordered regions lie at residues 1–52 (MPLR…KSDS), 232–256 (MEIDRRESLQRQEDRERKRREERVR), and 385–415 (EQDALRAKRNQEVADREWRRKEKENAQKKIE). Low complexity predominate over residues 8–18 (ASSSASTASNR). A coiled-coil region spans residues 276–524 (AEHREQEKEQ…EDIKKQKLEE (249 aa)). Basic and acidic residues predominate over residues 387–415 (DALRAKRNQEVADREWRRKEKENAQKKIE).

This sequence belongs to the CFAP45 family. As to quaternary structure, microtubule inner protein component of sperm flagellar doublet microtubules. Interacts with AK8; dimerization with AK8 may create a cavity at the interface of the dimer that can accommodate AMP. Interacts with CFAP52. Interacts with ENKUR. Directly interacts with DNALI1. Interacts with DNAH11. Interacts with DNAI1. In terms of tissue distribution, expressed in respiratory cells and in sperm (at protein level).

Its subcellular location is the cytoplasm. The protein resides in the cytoskeleton. The protein localises to the cilium axoneme. It is found in the flagellum axoneme. It localises to the cell projection. Its subcellular location is the cilium. The protein resides in the flagellum. Functionally, microtubule inner protein (MIP) part of the dynein-decorated doublet microtubules (DMTs) in cilia axoneme, which is required for motile cilia beating. It is an AMP-binding protein that may facilitate dynein ATPase-dependent ciliary and flagellar beating via adenine nucleotide homeostasis. May function as a donor of AMP to AK8 and hence promote ADP production. This Mus musculus (Mouse) protein is Cilia- and flagella-associated protein 45 (Cfap45).